Consider the following 185-residue polypeptide: Elongation factor P (185 aa).

It belongs to the elongation factor P family.

It is found in the cytoplasm. It participates in protein biosynthesis; polypeptide chain elongation. In terms of biological role, involved in peptide bond synthesis. Stimulates efficient translation and peptide-bond synthesis on native or reconstituted 70S ribosomes in vitro. Probably functions indirectly by altering the affinity of the ribosome for aminoacyl-tRNA, thus increasing their reactivity as acceptors for peptidyl transferase. The protein is Elongation factor P (efp) of Nostoc sp. (strain PCC 7120 / SAG 25.82 / UTEX 2576).